Reading from the N-terminus, the 211-residue chain is N-(5'-phosphoribosyl)anthranilate isomerase (211 aa).

This sequence belongs to the TrpF family.

The enzyme catalyses N-(5-phospho-beta-D-ribosyl)anthranilate = 1-(2-carboxyphenylamino)-1-deoxy-D-ribulose 5-phosphate. It functions in the pathway amino-acid biosynthesis; L-tryptophan biosynthesis; L-tryptophan from chorismate: step 3/5. The chain is N-(5'-phosphoribosyl)anthranilate isomerase from Zymomonas mobilis subsp. pomaceae (strain ATCC 29192 / DSM 22645 / JCM 10191 / CCUG 17912 / NBRC 13757 / NCIMB 11200 / NRRL B-4491 / Barker I).